We begin with the raw amino-acid sequence, 346 residues long: Peroxidase 19 (346 aa).

The signal sequence occupies residues methionine 1–serine 31. Intrachain disulfides connect cysteine 51–cysteine 134, cysteine 84–cysteine 89, cysteine 140–cysteine 342, and cysteine 219–cysteine 251. Histidine 82 acts as the Proton acceptor in catalysis. Ca(2+) contacts are provided by aspartate 83, valine 86, glycine 88, aspartate 90, and serine 92. Proline 182 is a binding site for substrate. Asparagine 185 carries an N-linked (GlcNAc...) asparagine glycan. Position 212 (histidine 212) interacts with heme b. A Ca(2+)-binding site is contributed by threonine 213. Aspartate 265, threonine 268, and aspartate 273 together coordinate Ca(2+).

This sequence belongs to the peroxidase family. Classical plant (class III) peroxidase subfamily. The cofactor is heme b. Requires Ca(2+) as cofactor.

Its subcellular location is the secreted. It catalyses the reaction 2 a phenolic donor + H2O2 = 2 a phenolic radical donor + 2 H2O. Its function is as follows. Removal of H(2)O(2), oxidation of toxic reductants, biosynthesis and degradation of lignin, suberization, auxin catabolism, response to environmental stresses such as wounding, pathogen attack and oxidative stress. These functions might be dependent on each isozyme/isoform in each plant tissue. The chain is Peroxidase 19 (PER19) from Arabidopsis thaliana (Mouse-ear cress).